Consider the following 135-residue polypeptide: MESRHAIREAAFQALFALATNPEADKDAVYAEVLPQDTEVPAYLTTLVEGVLSKQADLDAALTPQLKKGWTLSRLTKPDLIILRLGLYEIRYEEAMPEAAAINEAINLAKRYSDDQSAKFVNGILANFIQATPQA.

Belongs to the NusB family.

Involved in transcription antitermination. Required for transcription of ribosomal RNA (rRNA) genes. Binds specifically to the boxA antiterminator sequence of the ribosomal RNA (rrn) operons. The polypeptide is Transcription antitermination protein NusB (Lacticaseibacillus paracasei (strain ATCC 334 / BCRC 17002 / CCUG 31169 / CIP 107868 / KCTC 3260 / NRRL B-441) (Lactobacillus paracasei)).